The sequence spans 314 residues: Olfactory receptor 10A6 (314 aa).

The Extracellular portion of the chain corresponds to 1 to 25 (MERQNQSCVVEFILLGFSNYPELQG). Asn-5 carries an N-linked (GlcNAc...) asparagine glycan. Residues 26–46 (QLFVAFLVIYLVTLIGNAIII) traverse the membrane as a helical segment. Residues 47-54 (VIVSLDQS) are Cytoplasmic-facing. Residues 55 to 75 (LHVPMYLFLLNLSVVDLSFSA) traverse the membrane as a helical segment. At 76 to 99 (VIMPEMLVVLSTEKTTISFGGCFA) the chain is on the extracellular side. The cysteines at positions 97 and 189 are disulfide-linked. Residues 100–120 (QMYFILLFGGAECFLLGAMAY) form a helical membrane-spanning segment. Residues 121–139 (DRFAAICHPLNYQMIMNKG) lie on the Cytoplasmic side of the membrane. The chain crosses the membrane as a helical span at residues 140–160 (VFMKLIIFSWALGFMLGTVQT). At 161–197 (SWVSSFPFCGLNEINHISCETPAVLELACADTFLFEI) the chain is on the extracellular side. Residues 198–217 (YAFTGTFLIILVPFLLILLS) traverse the membrane as a helical segment. At 218–237 (YIRVLFAILKMPSTTGRQKA) the chain is on the cytoplasmic side. Residues 238-258 (FSTCAAHLTSVTLFYGTASMT) traverse the membrane as a helical segment. Residues 259-271 (YLQPKSGYSPETK) are Extracellular-facing. A helical transmembrane segment spans residues 272–292 (KVMSLSYSLLTPLLNLLIYSL). At 293–314 (RNSEMKRALMKLWRRRVVLHTI) the chain is on the cytoplasmic side.

It belongs to the G-protein coupled receptor 1 family.

The protein localises to the cell membrane. Functionally, odorant receptor. The chain is Olfactory receptor 10A6 (OR10A6) from Homo sapiens (Human).